Reading from the N-terminus, the 1342-residue chain is DNA-directed RNA polymerase subunit beta (1342 aa).

This sequence belongs to the RNA polymerase beta chain family. The RNAP catalytic core consists of 2 alpha, 1 beta, 1 beta' and 1 omega subunit. When a sigma factor is associated with the core the holoenzyme is formed, which can initiate transcription.

The enzyme catalyses RNA(n) + a ribonucleoside 5'-triphosphate = RNA(n+1) + diphosphate. In terms of biological role, DNA-dependent RNA polymerase catalyzes the transcription of DNA into RNA using the four ribonucleoside triphosphates as substrates. The protein is DNA-directed RNA polymerase subunit beta of Aliivibrio fischeri (strain MJ11) (Vibrio fischeri).